Consider the following 448-residue polypeptide: Homogentisate 1,2-dioxygenase (448 aa).

Residue His-303 is the Proton acceptor of the active site. 2 residues coordinate Fe cation: His-346 and Glu-352. Tyr-361 and His-382 together coordinate homogentisate. His-382 lines the Fe cation pocket.

The protein belongs to the homogentisate dioxygenase family. Hexamer; dimer of trimers. It depends on Fe cation as a cofactor.

The catalysed reaction is homogentisate + O2 = 4-maleylacetoacetate + H(+). It functions in the pathway amino-acid degradation; L-phenylalanine degradation; acetoacetate and fumarate from L-phenylalanine: step 4/6. Its function is as follows. Involved in the catabolism of homogentisate (2,5-dihydroxyphenylacetate or 2,5-OH-PhAc), a central intermediate in the degradation of phenylalanine and tyrosine. Catalyzes the oxidative ring cleavage of the aromatic ring of homogentisate to yield maleylacetoacetate. The chain is Homogentisate 1,2-dioxygenase from Rhodopseudomonas palustris (strain BisA53).